A 133-amino-acid chain; its full sequence is Large ribosomal subunit protein bL17 (133 aa).

It belongs to the bacterial ribosomal protein bL17 family. As to quaternary structure, part of the 50S ribosomal subunit. Contacts protein L32.

In Pseudoalteromonas translucida (strain TAC 125), this protein is Large ribosomal subunit protein bL17.